We begin with the raw amino-acid sequence, 98 residues long: Small ribosomal subunit protein uS17 (98 aa).

Belongs to the universal ribosomal protein uS17 family. As to quaternary structure, part of the 30S ribosomal subunit.

In terms of biological role, one of the primary rRNA binding proteins, it binds specifically to the 5'-end of 16S ribosomal RNA. In Synechococcus sp. (strain CC9605), this protein is Small ribosomal subunit protein uS17.